A 334-amino-acid chain; its full sequence is F-box only protein 16 (334 aa).

An F-box domain is found at 86–132; that stretch reads LDFTTKLPRVLSVYIFSFLDPRSLCRCAQVSWYWKSLAELDQLWMLK. 2 disordered regions span residues 168–222 and 314–334; these read PKTP…WRSS and LEHLQKHPGLQSPSPRLQSQS. A compositionally biased stretch (low complexity) spans 194 to 204; it reads SPSLAFRSSSS. Residues 210-222 show a composition bias toward basic and acidic residues; the sequence is NPGEKELPPWRSS. Over residues 323 to 334 the composition is skewed to low complexity; sequence LQSPSPRLQSQS.

In terms of assembly, part of a SCF (SKP1-cullin-F-box) protein ligase complex.

Functionally, probably recognizes and binds to some phosphorylated proteins and promotes their ubiquitination and degradation. The sequence is that of F-box only protein 16 (Fbxo16) from Mus musculus (Mouse).